Consider the following 351-residue polypeptide: Methylxanthine N1-demethylase NdmA (351 aa).

Positions 17–125 constitute a Rieske domain; the sequence is WHPVCTVTEL…CEERYGLIWI (109 aa). 4 residues coordinate [2Fe-2S] cluster: Cys62, His64, Cys81, and His84.

[2Fe-2S] cluster is required as a cofactor.

It catalyses the reaction caffeine + NADH + O2 + H(+) = theobromine + formaldehyde + NAD(+) + H2O. The catalysed reaction is caffeine + NADPH + O2 + H(+) = theobromine + formaldehyde + NADP(+) + H2O. The enzyme catalyses theophylline + NADH + O2 + H(+) = 3-methylxanthine + formaldehyde + NAD(+) + H2O. It carries out the reaction theophylline + NADPH + O2 + H(+) = 3-methylxanthine + formaldehyde + NADP(+) + H2O. It catalyses the reaction 1,7-dimethylxanthine + NADH + O2 + H(+) = 7-methylxanthine + formaldehyde + NAD(+) + H2O. The catalysed reaction is 1,7-dimethylxanthine + NADPH + O2 + H(+) = 7-methylxanthine + formaldehyde + NADP(+) + H2O. It functions in the pathway alkaloid degradation. Involved in the caffeine degradation, which is the essential first step for assimilating the carbon and nitrogen in caffeine. Catalyzes the N1-demethylation of caffeine to produce theobromine and formaldehyde. Also catalyzes the N1-demethylation of theophylline, paraxanthine, and 1-methylxanthine to 3-methylxanthine, 7-methylxanthine, and xanthine, respectively. NADH is the preferred substrate. This Pseudomonas putida (Arthrobacter siderocapsulatus) protein is Methylxanthine N1-demethylase NdmA (ndmA).